The following is a 97-amino-acid chain: Integration host factor subunit alpha (97 aa).

A disordered region spans residues 49 to 71 (FGNFDLRDKNQRPGRNPKTGEDI).

It belongs to the bacterial histone-like protein family. Heterodimer of an alpha and a beta chain.

Functionally, this protein is one of the two subunits of integration host factor, a specific DNA-binding protein that functions in genetic recombination as well as in transcriptional and translational control. The chain is Integration host factor subunit alpha from Shewanella woodyi (strain ATCC 51908 / MS32).